Here is a 230-residue protein sequence, read N- to C-terminus: MATKSKRTLAIRAMVDRNNRYAIEEALELVKKMATTKFDESVDVAVGLGIDPRKSDQVVRGAVVLPHGTGKQMRVAVFATADKATEAREAGADIVGMEDLAELVKAGQMDFDVVIATPDAMRVVGTLGPVLGPRGLMPNPKVGTVTADVRTAVINAKGGQVRYRADKGGIVHSTIGKSSFEVKALQENLLVLIDSLRKAKPATSKGIYIRKVNLSPTMGPGVAVDLSGLG.

It belongs to the universal ribosomal protein uL1 family. Part of the 50S ribosomal subunit.

Its function is as follows. Binds directly to 23S rRNA. The L1 stalk is quite mobile in the ribosome, and is involved in E site tRNA release. In terms of biological role, protein L1 is also a translational repressor protein, it controls the translation of the L11 operon by binding to its mRNA. The protein is Large ribosomal subunit protein uL1 of Acidithiobacillus ferrooxidans (strain ATCC 53993 / BNL-5-31) (Leptospirillum ferrooxidans (ATCC 53993)).